The primary structure comprises 181 residues: MDLVGTVVVAVWAMLPAYVPNNAAVLAGGGRPIDGGRSLGGRRLLGDGKTWRGTAVGTAAGVALAVALNALRPAAADALGVVLPAFPPAAMGTLAFGAMVGDIAASFLKRRTGRQRGAAFPVVDQLDFVVVALALTALAVPAWVGDTFGLPVLVTVAVLTPALHLLTNGIAYALGVKDEPW.

The next 5 helical transmembrane spans lie at 7–27 (VVVA…AVLA), 55–75 (AVGT…RPAA), 80–100 (GVVL…GAMV), 128–148 (FVVV…GDTF), and 150–170 (LPVL…TNGI).

Belongs to the CDP-archaeol synthase family. It depends on Mg(2+) as a cofactor.

The protein resides in the cell membrane. The enzyme catalyses 2,3-bis-O-(geranylgeranyl)-sn-glycerol 1-phosphate + CTP + H(+) = CDP-2,3-bis-O-(geranylgeranyl)-sn-glycerol + diphosphate. The protein operates within membrane lipid metabolism; glycerophospholipid metabolism. Functionally, catalyzes the formation of CDP-2,3-bis-(O-geranylgeranyl)-sn-glycerol (CDP-archaeol) from 2,3-bis-(O-geranylgeranyl)-sn-glycerol 1-phosphate (DGGGP) and CTP. This reaction is the third ether-bond-formation step in the biosynthesis of archaeal membrane lipids. This is CDP-archaeol synthase from Halobacterium salinarum (strain ATCC 29341 / DSM 671 / R1).